Reading from the N-terminus, the 94-residue chain is UPF0768 protein YBL029C-A (94 aa).

The protein belongs to the UPF0768 family.

The protein localises to the cell membrane. This is UPF0768 protein YBL029C-A from Saccharomyces cerevisiae (strain ATCC 204508 / S288c) (Baker's yeast).